A 352-amino-acid chain; its full sequence is Protein O-mannose kinase (352 aa).

At 1 to 16 (MERKPSVCRKSGSWNC) the chain is on the cytoplasmic side. A helical; Signal-anchor for type II membrane protein membrane pass occupies residues 17–37 (LLVLFLLLLFTVVSVNFLLYM). Topologically, residues 38 to 352 (YIDQMYAPSR…MAVAETREML (315 aa)) are lumenal. The region spanning 82 to 352 (VRKLKLVGEG…MAVAETREML (271 aa)) is the Protein kinase domain.

It belongs to the protein kinase superfamily. Ser/Thr protein kinase family. STKL subfamily.

It localises to the endoplasmic reticulum membrane. It carries out the reaction 3-O-[beta-D-GalNAc-(1-&gt;3)-beta-D-GlcNAc-(1-&gt;4)-alpha-D-Man]-L-Thr-[protein] + ATP = 3-O-[beta-D-GalNAc-(1-&gt;3)-beta-D-GlcNAc-(1-&gt;4)-(O-6-P-alpha-D-Man)]-Thr-[protein] + ADP + H(+). Protein O-mannose kinase that specifically mediates phosphorylation at the 6-position of an O-mannose of the trisaccharide (N-acetylgalactosamine (GalNAc)-beta-1,3-N-acetylglucosamine (GlcNAc)-beta-1,4-mannose) to generate phosphorylated O-mannosyl trisaccharide (N-acetylgalactosamine-beta-1,3-N-acetylglucosamine-beta-1,4-(phosphate-6-)mannose). Phosphorylated O-mannosyl trisaccharide is a carbohydrate structure present in alpha-dystroglycan (dag1), which is required for binding laminin G-like domain-containing extracellular proteins with high affinity. Only shows kinase activity when the GalNAc-beta-3-GlcNAc-beta-terminus is linked to the 4-position of O-mannose, suggesting that this disaccharide serves as the substrate recognition motif. The protein is Protein O-mannose kinase (pomk) of Xenopus laevis (African clawed frog).